We begin with the raw amino-acid sequence, 473 residues long: 3-isopropylmalate dehydratase large subunit (473 aa).

[4Fe-4S] cluster-binding residues include C351, C414, and C417.

It belongs to the aconitase/IPM isomerase family. LeuC type 1 subfamily. In terms of assembly, heterodimer of LeuC and LeuD. The cofactor is [4Fe-4S] cluster.

The enzyme catalyses (2R,3S)-3-isopropylmalate = (2S)-2-isopropylmalate. It participates in amino-acid biosynthesis; L-leucine biosynthesis; L-leucine from 3-methyl-2-oxobutanoate: step 2/4. In terms of biological role, catalyzes the isomerization between 2-isopropylmalate and 3-isopropylmalate, via the formation of 2-isopropylmaleate. The chain is 3-isopropylmalate dehydratase large subunit from Acidovorax ebreus (strain TPSY) (Diaphorobacter sp. (strain TPSY)).